The sequence spans 348 residues: Dihydroorotase (348 aa).

Zn(2+)-binding residues include His-17 and His-19. Substrate contacts are provided by residues 19–21 (HLR) and Asn-45. Residues Lys-103, His-140, and His-178 each coordinate Zn(2+). N6-carboxylysine is present on Lys-103. Position 140 (His-140) interacts with substrate. Leu-223 serves as a coordination point for substrate. Position 251 (Asp-251) interacts with Zn(2+). Asp-251 is a catalytic residue. Residues His-255 and Ala-267 each coordinate substrate.

The protein belongs to the metallo-dependent hydrolases superfamily. DHOase family. Class II DHOase subfamily. In terms of assembly, homodimer. Requires Zn(2+) as cofactor.

The catalysed reaction is (S)-dihydroorotate + H2O = N-carbamoyl-L-aspartate + H(+). Its pathway is pyrimidine metabolism; UMP biosynthesis via de novo pathway; (S)-dihydroorotate from bicarbonate: step 3/3. Catalyzes the reversible cyclization of carbamoyl aspartate to dihydroorotate. In Escherichia coli O139:H28 (strain E24377A / ETEC), this protein is Dihydroorotase.